A 349-amino-acid polypeptide reads, in one-letter code: CCN family member 2 (349 aa).

An N-terminal signal peptide occupies residues 1–26; that stretch reads MSATGLGPVRCAFVLLLALCSRPASS. The IGFBP N-terminal domain maps to 27-98; it reads QDCSAPCQCP…NRKIGVCTAK (72 aa). Intrachain disulfides connect Cys-29–Cys-54, Cys-33–Cys-56, Cys-35–Cys-57, Cys-43–Cys-60, Cys-68–Cys-82, and Cys-74–Cys-95. One can recognise a VWFC domain in the interval 101–167; sequence APCVFGGTVY…GKCCEEWVCD (67 aa). The 46-residue stretch at 198-243 folds into the TSP type-1 domain; sequence NCLVQTTEWSACSKTCGMGISTRVTNDNAFCRLEKQSRLCMVRPCE. Positions 247 to 349 are heparin-binding; that stretch reads EENIKKGKKC…YYRKMYGDMA (103 aa). 5 cysteine pairs are disulfide-bonded: Cys-256–Cys-293, Cys-273–Cys-307, Cys-284–Cys-323, Cys-287–Cys-325, and Cys-292–Cys-329. One can recognise a CTCK domain in the interval 256 to 330; that stretch reads CIRTPKISKP…KTCACHYNCP (75 aa).

The protein belongs to the CCN family. As to quaternary structure, monomer. Interacts with TSKU.

It is found in the secreted. Its subcellular location is the extracellular space. It localises to the extracellular matrix. Major connective tissue mitoattractant secreted by vascular endothelial cells. Promotes proliferation and differentiation of chondrocytes. Is involved in the stimulation of osteoblast differentiation and has a critical role in osteogenesis. Mediates heparin- and divalent cation-dependent cell adhesion in many cell types including fibroblasts, myofibroblasts, endothelial and epithelial cells. Enhances fibroblast growth factor-induced DNA synthesis. The polypeptide is CCN family member 2 (CCN2) (Bos taurus (Bovine)).